The primary structure comprises 490 residues: ATP synthase subunit beta, chloroplastic (490 aa).

170–177 serves as a coordination point for ATP; it reads GGAGVGKT.

It belongs to the ATPase alpha/beta chains family. F-type ATPases have 2 components, CF(1) - the catalytic core - and CF(0) - the membrane proton channel. CF(1) has five subunits: alpha(3), beta(3), gamma(1), delta(1), epsilon(1). CF(0) has four main subunits: a(1), b(1), b'(1) and c(9-12).

It localises to the plastid. Its subcellular location is the chloroplast thylakoid membrane. It catalyses the reaction ATP + H2O + 4 H(+)(in) = ADP + phosphate + 5 H(+)(out). In terms of biological role, produces ATP from ADP in the presence of a proton gradient across the membrane. The catalytic sites are hosted primarily by the beta subunits. In Ipomoea setosa (Brazilian morning glory), this protein is ATP synthase subunit beta, chloroplastic.